We begin with the raw amino-acid sequence, 650 residues long: Acetyl-coenzyme A synthetase (650 aa).

CoA is bound by residues 191 to 194 (RGGR), Thr-311, and Asn-335. ATP contacts are provided by residues 387–389 (GEP), 411–416 (DTWWQT), Asp-500, and Arg-515. Ser-523 is a binding site for CoA. Position 526 (Arg-526) interacts with ATP. 3 residues coordinate Mg(2+): Val-537, His-539, and Val-542. Position 584 (Arg-584) interacts with CoA. Residue Lys-609 is modified to N6-acetyllysine.

The protein belongs to the ATP-dependent AMP-binding enzyme family. The cofactor is Mg(2+). Acetylated. Deacetylation by the SIR2-homolog deacetylase activates the enzyme.

It catalyses the reaction acetate + ATP + CoA = acetyl-CoA + AMP + diphosphate. Catalyzes the conversion of acetate into acetyl-CoA (AcCoA), an essential intermediate at the junction of anabolic and catabolic pathways. AcsA undergoes a two-step reaction. In the first half reaction, AcsA combines acetate with ATP to form acetyl-adenylate (AcAMP) intermediate. In the second half reaction, it can then transfer the acetyl group from AcAMP to the sulfhydryl group of CoA, forming the product AcCoA. The polypeptide is Acetyl-coenzyme A synthetase (Shewanella frigidimarina (strain NCIMB 400)).